We begin with the raw amino-acid sequence, 249 residues long: Bis(5'-nucleosyl)-tetraphosphatase PrpE [asymmetrical] (249 aa).

Belongs to the PrpE family. Requires Ni(2+) as cofactor.

It catalyses the reaction P(1),P(4)-bis(5'-guanosyl) tetraphosphate + H2O = GMP + GTP + 2 H(+). Asymmetrically hydrolyzes Ap4p to yield AMP and ATP. The chain is Bis(5'-nucleosyl)-tetraphosphatase PrpE [asymmetrical] from Bacillus velezensis (strain DSM 23117 / BGSC 10A6 / LMG 26770 / FZB42) (Bacillus amyloliquefaciens subsp. plantarum).